A 180-amino-acid chain; its full sequence is MASSVMSSAAVATSTNAAQASMVAPFTGLKSAASFPVSRKQNLDITSIASNGGRVQCMQVWPPYGKKKYETLSYLPDLTDEQLLKEIEYLLNKGWVPCLEFETEHGFVYREYHASPRYYDGRYWTMWKLPMFGCTDATQVLGELQEAKKAYPNAWIRIIGFDNVRQVQCISFIAYKPPGY.

The N-terminal 56 residues, 1–56, are a transit peptide targeting the chloroplast; that stretch reads MASSVMSSAAVATSTNAAQASMVAPFTGLKSAASFPVSRKQNLDITSIASNGGRVQ.

Belongs to the RuBisCO small chain family. Heterohexadecamer of 8 large and 8 small subunits.

It localises to the plastid. The protein resides in the chloroplast. RuBisCO catalyzes two reactions: the carboxylation of D-ribulose 1,5-bisphosphate, the primary event in carbon dioxide fixation, as well as the oxidative fragmentation of the pentose substrate. Both reactions occur simultaneously and in competition at the same active site. Although the small subunit is not catalytic it is essential for maximal activity. In Petunia hybrida (Petunia), this protein is Ribulose bisphosphate carboxylase small subunit, chloroplastic 2.